Consider the following 335-residue polypeptide: Nucleoid-associated protein KPK_1538 (335 aa).

The protein belongs to the YejK family.

It is found in the cytoplasm. Its subcellular location is the nucleoid. The protein is Nucleoid-associated protein KPK_1538 of Klebsiella pneumoniae (strain 342).